The primary structure comprises 720 residues: Capsid protein (720 aa).

Disordered regions lie at residues 546-569 and 616-691; these read GTQRPPRPQPTDPCQQPRWEGPNF and TEPS…RDRD. The span at 652–664 shows a compositional bias: acidic residues; it reads PTDEDERYLEAEA.

This sequence belongs to the anelloviridae capsid protein family.

Its subcellular location is the virion. Self-assembles to form an icosahedral capsid with a T=1 symmetry, about 30 nm in diameter, and consisting of 60 capsid proteins. The capsid encapsulates the genomic DNA. Capsid protein is involved in attachment and entry into the host cell. This chain is Capsid protein, found in Torque teno douroucouli virus (isolate At-TTV3).